The sequence spans 391 residues: MQVTPIAMEDASFAYRLGTECTEDVVARLATLGASSYLVVADTTVAGLYGHDLTARIDKEAGPAHLLTHESGEVHKDLTTVSVLAEQALERGADRRSVVVALGGGVTGNITGLMASLLFRGIRLVHVPTTVVAMLDSVLSLKQAVNATFGKNLVGTFYQPVEVLADTAFLRTLPPREIRSGLGEVVKNALAIRPAMLDRLGDALRADARYDDETLRWIIAESLTAKADVTRDDKHERRTGLVLEYGHTAGHAIEHASRGEVAHGAGVAVGMTIAAEVSRRLGHAGPDFVALHRELVAAAGVEPAVPAHVDPALVKNWLAYDNKRGYLDSPPGHTPMVLLSAPGEVLHTGPMPLVPVPLALLEEAVDEAARRGRDAAPAAAYVGPPAAGPLP.

NAD(+)-binding positions include Asp42, 73 to 76, 105 to 109, 129 to 130, 140 to 142, and 151 to 152; these read EVHK, GVTGN, TT, SLK, and KN. Residue Lys142 is part of the active site. Glu184 is a binding site for Co(2+). Glu244 is an active-site residue. Residues His247 and His263 each coordinate Co(2+).

It belongs to the sugar phosphate cyclases superfamily. DOI synthase family. NAD(+) serves as cofactor. The cofactor is Co(2+).

It catalyses the reaction D-glucose 6-phosphate = 2-deoxy-L-scyllo-inosose + phosphate. The protein operates within metabolic intermediate biosynthesis; 2-deoxystreptamine biosynthesis; 2-deoxystreptamine from D-glucose 6-phosphate: step 1/4. It participates in antibiotic biosynthesis; ribostamycin biosynthesis. Its function is as follows. Catalyzes the intramolecular carbocycle formation from D-glucose-6-phosphate to 2-deoxy-scyllo-inosose (DOI). In Streptomyces ribosidificus, this protein is 2-deoxy-scyllo-inosose synthase (rbmA).